The chain runs to 32 residues: Delta-conotoxin EVIA (32 aa).

Cystine bridges form between Cys-3–Cys-21, Cys-10–Cys-25, and Cys-20–Cys-29. 4-hydroxyproline is present on Pro-6. A Leucine amide modification is found at Leu-32.

The protein belongs to the conotoxin O1 superfamily. In terms of tissue distribution, expressed by the venom duct.

It is found in the secreted. Functionally, delta-conotoxins bind to site 6 of voltage-gated sodium channels and inhibit the inactivation process. This toxin inhibits sodium channel inactivation in neuronal membranes from amphibians and mammals (Nav1.2a/SCN1A, Nav1.3/SCN3A and Nav1.6/SCN8A) upon binding to receptor site 6. The polypeptide is Delta-conotoxin EVIA (Conus ermineus (Agate cone)).